The following is a 111-amino-acid chain: Flagellar hook-basal body complex protein FliE (111 aa).

This sequence belongs to the FliE family.

The protein localises to the bacterial flagellum basal body. In Sinorhizobium fredii (strain NBRC 101917 / NGR234), this protein is Flagellar hook-basal body complex protein FliE.